We begin with the raw amino-acid sequence, 306 residues long: Acetyl-coenzyme A carboxylase carboxyl transferase subunit beta (306 aa).

A CoA carboxyltransferase N-terminal domain is found at 25–294 (LWIKDPTSGE…APEPSHAFSK (270 aa)). Residues 287 to 306 (EPSHAFSKDSQTQISKTKAA) form a disordered region. The span at 294–306 (KDSQTQISKTKAA) shows a compositional bias: polar residues.

It belongs to the AccD/PCCB family. As to quaternary structure, acetyl-CoA carboxylase is a heterohexamer composed of biotin carboxyl carrier protein (AccB), biotin carboxylase (AccC) and two subunits each of ACCase subunit alpha (AccA) and ACCase subunit beta (AccD).

Its subcellular location is the cytoplasm. It carries out the reaction N(6)-carboxybiotinyl-L-lysyl-[protein] + acetyl-CoA = N(6)-biotinyl-L-lysyl-[protein] + malonyl-CoA. The protein operates within lipid metabolism; malonyl-CoA biosynthesis; malonyl-CoA from acetyl-CoA: step 1/1. Its function is as follows. Component of the acetyl coenzyme A carboxylase (ACC) complex. Biotin carboxylase (BC) catalyzes the carboxylation of biotin on its carrier protein (BCCP) and then the CO(2) group is transferred by the transcarboxylase to acetyl-CoA to form malonyl-CoA. The protein is Acetyl-coenzyme A carboxylase carboxyl transferase subunit beta of Bartonella bacilliformis (strain ATCC 35685 / KC583 / Herrer 020/F12,63).